The primary structure comprises 530 residues: Ubiquitin carboxyl-terminal hydrolase 17-like protein 19 (530 aa).

Residues 80-375 (AGLQNMGNTC…QAYVLFYIQK (296 aa)) enclose the USP domain. Catalysis depends on cysteine 89, which acts as the Nucleophile. Histidine 334 (proton acceptor) is an active-site residue. Basic and acidic residues-rich tracts occupy residues 382 to 392 (SESVSRGREPR) and 398 to 413 (DTDRRATQGELKRDHP). 2 disordered regions span residues 382 to 413 (SESVSRGREPRALGAEDTDRRATQGELKRDHP) and 476 to 530 (KNHH…LVCQ). The segment covering 484–495 (SSLLKLSSTTPT) has biased composition (low complexity). Positions 496-505 (HQESMNTGTL) are enriched in polar residues. Over residues 510–524 (GRARRSKGKNKHSKR) the composition is skewed to basic residues.

Belongs to the peptidase C19 family. USP17 subfamily.

The protein localises to the nucleus. Its subcellular location is the endoplasmic reticulum. It catalyses the reaction Thiol-dependent hydrolysis of ester, thioester, amide, peptide and isopeptide bonds formed by the C-terminal Gly of ubiquitin (a 76-residue protein attached to proteins as an intracellular targeting signal).. Functionally, deubiquitinating enzyme that removes conjugated ubiquitin from specific proteins to regulate different cellular processes that may include cell proliferation, progression through the cell cycle, apoptosis, cell migration, and the cellular response to viral infection. The polypeptide is Ubiquitin carboxyl-terminal hydrolase 17-like protein 19 (USP17L19) (Homo sapiens (Human)).